The primary structure comprises 617 residues: uncharacterized protein (617 aa).

Residues 10–30 form a helical membrane-spanning segment; sequence AFFFFFVSLILLFLSPSYSDV. Positions 34–58 are disordered; the sequence is ESDPIPYENSDASPGVVTSSESDRQ. Residues 43–53 are compositionally biased toward polar residues; sequence SDASPGVVTSS. Residues 60-86 adopt a coiled-coil conformation; that stretch reads VSLHRLEELVRNLTELVARLDAKLSET. Residues 473-493 form a helical membrane-spanning segment; that stretch reads MLWSSPVFFFILFLFGAWHFF. Over residues 511–529 the composition is skewed to low complexity; sequence STTMSSSSTTTAQNSSAFS. Residues 511–617 form a disordered region; the sequence is STTMSSSSTT…GNNKALDDES (107 aa). Residues 531–543 are compositionally biased toward basic and acidic residues; it reads STRRNDDHMDLRR. The span at 563 to 584 shows a compositional bias: polar residues; sequence VGSNDPSSRAPVETTNYRTTAQ. The segment covering 590 to 599 has biased composition (gly residues); that stretch reads GGSGLDSGGF.

It localises to the membrane. This is an uncharacterized protein from Arabidopsis thaliana (Mouse-ear cress).